The sequence spans 141 residues: Small ribosomal subunit protein uS9c (141 aa).

This sequence belongs to the universal ribosomal protein uS9 family.

The protein resides in the plastid. It is found in the chloroplast. In Tupiella akineta (Green alga), this protein is Small ribosomal subunit protein uS9c (rps9).